The sequence spans 437 residues: Epsilon-sarcoglycan (437 aa).

Residues 1-317 (MQLPWWWELG…LKSRDYYTDF (317 aa)) lie on the Extracellular side of the membrane. Asn-200 carries N-linked (GlcNAc...) asparagine glycosylation. Residues 318–338 (LVTLAVPSAVALVLFLILAYI) traverse the membrane as a helical segment. Over 339–437 (MCCRREGVEK…QQQTTGKWYS (99 aa)) the chain is Cytoplasmic. Positions 418–437 (QNLPHQTQIPQQQTTGKWYS) are disordered.

This sequence belongs to the sarcoglycan alpha/epsilon family. In terms of processing, N-glycosylated. Post-translationally, ubiquitinated, leading to its degradation by the proteasome.

The protein localises to the cell membrane. It is found in the sarcolemma. The protein resides in the cytoplasm. Its subcellular location is the cytoskeleton. It localises to the cell projection. The protein localises to the dendrite. It is found in the golgi apparatus. Functionally, component of the sarcoglycan complex, a subcomplex of the dystrophin-glycoprotein complex which forms a link between the F-actin cytoskeleton and the extracellular matrix. This Bos taurus (Bovine) protein is Epsilon-sarcoglycan (SGCE).